The following is a 202-amino-acid chain: Pycsar effector protein PtPycTM (202 aa).

3 helical membrane passes run 60 to 80, 85 to 105, and 181 to 201; these read GVVL…AADI, LVIL…AVLA, and ILVG…VALG.

It is found in the cell membrane. In terms of biological role, pycsar (pyrimidine cyclase system for antiphage resistance) provides immunity against bacteriophage. The pyrimidine cyclase (PycC) synthesizes cyclic nucleotides in response to infection; these serve as specific second messenger signals. The signals activate the adjacent effector, leading to bacterial cell death and abortive phage infection. A clade D Pycsar system. Functionally, the effector gene of a two-gene Pycsar system. Expression of this and adjacent uridylate cyclase PtPycC (AC A0A4V2JTK3) probably confers resistance to bacteriophage. The genes are probably only expressed in response to bacteriophage infection. Probably only responds to cUMP (produced by its cognate NTP cyclase), acts by impairing membrane integrity. The chain is Pycsar effector protein PtPycTM from Propioniciclava tarda.